Here is a 271-residue protein sequence, read N- to C-terminus: Phosphatidylglycerol--prolipoprotein diacylglyceryl transferase (271 aa).

7 helical membrane-spanning segments follow: residues 18 to 38 (IFGLKVHWYGIMYVLALLVAL), 60 to 80 (YFIWVEIGVILGARIGYILIY), 103 to 123 (FVGIRGMSYHGAVVGFLIATY), 137 to 157 (LDLVAISVPCGYIFGRIGNFL), 181 to 201 (PSQLYEAFLEGFIVFIILLLI), 209 to 229 (GELIAYYTILYALARFVCEFF), and 236 to 256 (IGFVAFGMSMGQILSLLMFLL). Residue Arg152 participates in a 1,2-diacyl-sn-glycero-3-phospho-(1'-sn-glycerol) binding.

This sequence belongs to the Lgt family.

The protein resides in the cell inner membrane. It carries out the reaction L-cysteinyl-[prolipoprotein] + a 1,2-diacyl-sn-glycero-3-phospho-(1'-sn-glycerol) = an S-1,2-diacyl-sn-glyceryl-L-cysteinyl-[prolipoprotein] + sn-glycerol 1-phosphate + H(+). The protein operates within protein modification; lipoprotein biosynthesis (diacylglyceryl transfer). Catalyzes the transfer of the diacylglyceryl group from phosphatidylglycerol to the sulfhydryl group of the N-terminal cysteine of a prolipoprotein, the first step in the formation of mature lipoproteins. This is Phosphatidylglycerol--prolipoprotein diacylglyceryl transferase from Campylobacter lari (strain RM2100 / D67 / ATCC BAA-1060).